We begin with the raw amino-acid sequence, 338 residues long: Lipoate-protein ligase A (338 aa).

The BPL/LPL catalytic domain maps to 29–216 (PTTQRVLFLW…AFFDYFGEQC (188 aa)). ATP-binding positions include Arg71, 76 to 79 (GAVF), and Lys134. (R)-lipoate is bound at residue Lys134.

This sequence belongs to the LplA family. In terms of assembly, monomer.

The protein localises to the cytoplasm. The catalysed reaction is L-lysyl-[lipoyl-carrier protein] + (R)-lipoate + ATP = N(6)-[(R)-lipoyl]-L-lysyl-[lipoyl-carrier protein] + AMP + diphosphate + H(+). It functions in the pathway protein modification; protein lipoylation via exogenous pathway; protein N(6)-(lipoyl)lysine from lipoate: step 1/2. Its pathway is protein modification; protein lipoylation via exogenous pathway; protein N(6)-(lipoyl)lysine from lipoate: step 2/2. Functionally, catalyzes both the ATP-dependent activation of exogenously supplied lipoate to lipoyl-AMP and the transfer of the activated lipoyl onto the lipoyl domains of lipoate-dependent enzymes. This is Lipoate-protein ligase A from Pectobacterium carotovorum subsp. carotovorum (strain PC1).